A 421-amino-acid polypeptide reads, in one-letter code: Subtilisin-like protease 2 (421 aa).

Residues 1-16 (MQLLNFGLLLLPFVAG) form the signal peptide. The propeptide occupies 17–122 (DLAPQPEPLL…VHPDQHVYLA (106 aa)). The Inhibitor I9 domain maps to 36–122 (QYIVTLKEGL…VHPDQHVYLA (87 aa)). The Peptidase S8 domain occupies 131–421 (RWGLGYMSSK…ERKFTLPKYF (291 aa)). Active-site charge relay system residues include Asp-169 and His-201. Residues Asn-248, Asn-261, and Asn-348 are each glycosylated (N-linked (GlcNAc...) asparagine). The active-site Charge relay system is the Ser-357. Residue Asn-388 is glycosylated (N-linked (GlcNAc...) asparagine).

This sequence belongs to the peptidase S8 family.

Its subcellular location is the secreted. Functionally, secreted subtilisin-like serine protease with keratinolytic activity that contributes to pathogenicity. This Trichophyton equinum (Horse ringworm fungus) protein is Subtilisin-like protease 2 (SUB2).